We begin with the raw amino-acid sequence, 92 residues long: UPF0223 protein SZO_10560 (92 aa).

This sequence belongs to the UPF0223 family.

The sequence is that of UPF0223 protein SZO_10560 from Streptococcus equi subsp. zooepidemicus (strain H70).